Reading from the N-terminus, the 360-residue chain is Phospho-N-acetylmuramoyl-pentapeptide-transferase (360 aa).

Residues 1–25 (MLVWLAEHLVKYYSGFNVFSYLTFR) are Periplasmic-facing. A helical membrane pass occupies residues 26 to 46 (AIVSLLTALFISLWMGPRMIA). The Cytoplasmic segment spans residues 47-71 (RLQKLSFGQVVRNDGPESHFSKRGT). A helical transmembrane segment spans residues 72–92 (PTMGGIMILTSIVISVLLWAY). Position 93 (proline 93) is a topological domain, periplasmic. Residues 94 to 114 (SNPYVWCVLVVLIGYGIIGFV) form a helical membrane-spanning segment. At 115-131 (DDYRKVVRKDTKGLIAR) the chain is on the cytoplasmic side. The chain crosses the membrane as a helical span at residues 132-152 (WKYFWMSVIALGVAFALYLVG). At 153-167 (KDTPATQLVVPFFKD) the chain is on the periplasmic side. The chain crosses the membrane as a helical span at residues 168 to 188 (VMPQLGLFYILLSYFVIVGTG). Residues 189-198 (NAVNLTDGLD) are Cytoplasmic-facing. The chain crosses the membrane as a helical span at residues 199–219 (GLAIMPTVFVAAGFALVAWAT). Residues 220–235 (GNMNFANYLHIPYLRH) are Periplasmic-facing. Residues 236–256 (AGELVIVCTAIVGAGLGFLWF) form a helical membrane-spanning segment. Topologically, residues 257–262 (NTYPAQ) are cytoplasmic. A helical transmembrane segment spans residues 263–283 (VFMGDVGSLALGGALGIIAVL). The Periplasmic segment spans residues 284–287 (LRQE). A helical transmembrane segment spans residues 288–308 (FLLVIMGGVFVVETLSVILQV). Residues 309-337 (GSFKLRGQRIFRMAPIHHHYELKGWPEPR) lie on the Cytoplasmic side of the membrane. Residues 338–358 (VIVRFWIISLMLVLIGLATLK) form a helical membrane-spanning segment. At 359–360 (VR) the chain is on the periplasmic side.

It belongs to the glycosyltransferase 4 family. MraY subfamily. Mg(2+) serves as cofactor.

Its subcellular location is the cell inner membrane. It carries out the reaction UDP-N-acetyl-alpha-D-muramoyl-L-alanyl-gamma-D-glutamyl-meso-2,6-diaminopimeloyl-D-alanyl-D-alanine + di-trans,octa-cis-undecaprenyl phosphate = di-trans,octa-cis-undecaprenyl diphospho-N-acetyl-alpha-D-muramoyl-L-alanyl-D-glutamyl-meso-2,6-diaminopimeloyl-D-alanyl-D-alanine + UMP. Its pathway is cell wall biogenesis; peptidoglycan biosynthesis. Its function is as follows. Catalyzes the initial step of the lipid cycle reactions in the biosynthesis of the cell wall peptidoglycan: transfers peptidoglycan precursor phospho-MurNAc-pentapeptide from UDP-MurNAc-pentapeptide onto the lipid carrier undecaprenyl phosphate, yielding undecaprenyl-pyrophosphoryl-MurNAc-pentapeptide, known as lipid I. In Salmonella gallinarum (strain 287/91 / NCTC 13346), this protein is Phospho-N-acetylmuramoyl-pentapeptide-transferase.